A 207-amino-acid chain; its full sequence is 2,3-bisphosphoglycerate-dependent phosphoglycerate mutase (207 aa).

Residues 10 to 17 (RHGQSEWN), 23 to 24 (TG), R62, 89 to 92 (ERDY), K100, 116 to 117 (RR), and 160 to 161 (GN) each bind substrate. H11 (tele-phosphohistidine intermediate) is an active-site residue. The Proton donor/acceptor role is filled by E89.

The protein belongs to the phosphoglycerate mutase family. BPG-dependent PGAM subfamily. As to quaternary structure, homodimer.

It catalyses the reaction (2R)-2-phosphoglycerate = (2R)-3-phosphoglycerate. It participates in carbohydrate degradation; glycolysis; pyruvate from D-glyceraldehyde 3-phosphate: step 3/5. In terms of biological role, catalyzes the interconversion of 2-phosphoglycerate and 3-phosphoglycerate. In Bradyrhizobium diazoefficiens (strain JCM 10833 / BCRC 13528 / IAM 13628 / NBRC 14792 / USDA 110), this protein is 2,3-bisphosphoglycerate-dependent phosphoglycerate mutase.